Reading from the N-terminus, the 206-residue chain is Urease accessory protein UreG (206 aa).

13–20 serves as a coordination point for GTP; the sequence is GPVGSGKT.

This sequence belongs to the SIMIBI class G3E GTPase family. UreG subfamily. Homodimer. UreD, UreF and UreG form a complex that acts as a GTP-hydrolysis-dependent molecular chaperone, activating the urease apoprotein by helping to assemble the nickel containing metallocenter of UreC. The UreE protein probably delivers the nickel.

It localises to the cytoplasm. In terms of biological role, facilitates the functional incorporation of the urease nickel metallocenter. This process requires GTP hydrolysis, probably effectuated by UreG. The polypeptide is Urease accessory protein UreG (Haloquadratum walsbyi (strain DSM 16790 / HBSQ001)).